Reading from the N-terminus, the 212-residue chain is Kynurenine formamidase (212 aa).

Tryptophan 17 serves as a coordination point for substrate. Residues histidine 48, histidine 52, and aspartate 54 each contribute to the Zn(2+) site. Histidine 58 functions as the Proton donor/acceptor in the catalytic mechanism. Residues histidine 161 and glutamate 173 each coordinate Zn(2+).

It belongs to the Cyclase 1 superfamily. KynB family. Homodimer. Requires Zn(2+) as cofactor.

The catalysed reaction is N-formyl-L-kynurenine + H2O = L-kynurenine + formate + H(+). It functions in the pathway amino-acid degradation; L-tryptophan degradation via kynurenine pathway; L-kynurenine from L-tryptophan: step 2/2. Its function is as follows. Catalyzes the hydrolysis of N-formyl-L-kynurenine to L-kynurenine, the second step in the kynurenine pathway of tryptophan degradation. The polypeptide is Kynurenine formamidase (Salinibacter ruber (strain DSM 13855 / M31)).